Here is a 602-residue protein sequence, read N- to C-terminus: Exo-poly-alpha-D-galacturonosidase (602 aa).

A signal peptide spans Met1–Ala27. Residues Ala32–Pro149 form the Fibronectin type-III domain. Asp395 (proton donor) is an active-site residue. Residue His428 is part of the active site.

Belongs to the glycosyl hydrolase 28 family.

The protein localises to the secreted. It carries out the reaction [(1-&gt;4)-alpha-D-galacturonosyl](n) + H2O = alpha-D-galacturonosyl-(1-&gt;4)-D-galacturonate + [(1-&gt;4)-alpha-D-galacturonosyl](n-2). Its function is as follows. Contributes significantly to bacterial utilization of polygalacturonate and the induction of pectate lyase in the presence of extracellular pectic polymers. The chain is Exo-poly-alpha-D-galacturonosidase (pehX) from Dickeya chrysanthemi (Pectobacterium chrysanthemi).